The chain runs to 554 residues: Potassium/proton antiporter CemA (554 aa).

The helical transmembrane segment at 50–70 (SLFVVLFIPFFINIFTKIYVF) threads the bilayer. An insert region spans residues 113–410 (KTENFFPEKP…VPYNFNKNTE (298 aa)). The next 3 helical transmembrane spans lie at 429–449 (ISAI…LFLL), 479–499 (MLLF…EVIF), and 514–534 (IIFL…KYWI).

Belongs to the CemA family.

The protein resides in the plastid. It is found in the chloroplast inner membrane. The enzyme catalyses K(+)(in) + H(+)(out) = K(+)(out) + H(+)(in). Contributes to K(+)/H(+) antiport activity by supporting proton efflux to control proton extrusion and homeostasis in chloroplasts in a light-dependent manner to modulate photosynthesis. Prevents excessive induction of non-photochemical quenching (NPQ) under continuous-light conditions. Indirectly promotes efficient inorganic carbon uptake into chloroplasts. This is Potassium/proton antiporter CemA from Stigeoclonium helveticum (Green alga).